We begin with the raw amino-acid sequence, 196 residues long: Peptidyl-tRNA hydrolase (196 aa).

TRNA is bound at residue Tyr18. The active-site Proton acceptor is the His23. Phe69, Asn71, and Asn117 together coordinate tRNA.

This sequence belongs to the PTH family. As to quaternary structure, monomer.

Its subcellular location is the cytoplasm. The catalysed reaction is an N-acyl-L-alpha-aminoacyl-tRNA + H2O = an N-acyl-L-amino acid + a tRNA + H(+). In terms of biological role, hydrolyzes ribosome-free peptidyl-tRNAs (with 1 or more amino acids incorporated), which drop off the ribosome during protein synthesis, or as a result of ribosome stalling. Catalyzes the release of premature peptidyl moieties from peptidyl-tRNA molecules trapped in stalled 50S ribosomal subunits, and thus maintains levels of free tRNAs and 50S ribosomes. The protein is Peptidyl-tRNA hydrolase of Vibrio parahaemolyticus serotype O3:K6 (strain RIMD 2210633).